A 168-amino-acid chain; its full sequence is Protein-export protein SecB (168 aa).

Belongs to the SecB family. In terms of assembly, homotetramer, a dimer of dimers. One homotetramer interacts with 1 SecA dimer.

It is found in the cytoplasm. Its function is as follows. One of the proteins required for the normal export of preproteins out of the cell cytoplasm. It is a molecular chaperone that binds to a subset of precursor proteins, maintaining them in a translocation-competent state. It also specifically binds to its receptor SecA. The polypeptide is Protein-export protein SecB (Sinorhizobium medicae (strain WSM419) (Ensifer medicae)).